Consider the following 141-residue polypeptide: Nucleoside diphosphate kinase (141 aa).

ATP is bound by residues Lys-11, Phe-59, Arg-87, Thr-93, Arg-104, and Asn-114. His-117 serves as the catalytic Pros-phosphohistidine intermediate.

Belongs to the NDK family. Homotetramer. Requires Mg(2+) as cofactor.

It localises to the cytoplasm. It carries out the reaction a 2'-deoxyribonucleoside 5'-diphosphate + ATP = a 2'-deoxyribonucleoside 5'-triphosphate + ADP. The enzyme catalyses a ribonucleoside 5'-diphosphate + ATP = a ribonucleoside 5'-triphosphate + ADP. Functionally, major role in the synthesis of nucleoside triphosphates other than ATP. The ATP gamma phosphate is transferred to the NDP beta phosphate via a ping-pong mechanism, using a phosphorylated active-site intermediate. The chain is Nucleoside diphosphate kinase from Chromobacterium violaceum (strain ATCC 12472 / DSM 30191 / JCM 1249 / CCUG 213 / NBRC 12614 / NCIMB 9131 / NCTC 9757 / MK).